Here is a 251-residue protein sequence, read N- to C-terminus: Derlin-1 (251 aa).

An N-acetylserine modification is found at S2. The Cytoplasmic segment spans residues S2–T15. Residues R16–L31 form a helical membrane-spanning segment. Topologically, residues G32–G69 are lumenal. The chain crosses the membrane as a helical span at residues F70–G89. Topologically, residues A90–R94 are cytoplasmic. A helical transmembrane segment spans residues P95 to A115. Residues M116–M122 are Lumenal-facing. Residues I123–N137 traverse the membrane as a helical segment. Residues R138–Y154 lie on the Cytoplasmic side of the membrane. A helical transmembrane segment spans residues L155–I166. The Lumenal portion of the chain corresponds to G167–V170. Residues I171–R189 form a helical membrane-spanning segment. Over Y190–Q251 the chain is Cytoplasmic. Position 201 is a phosphoserine (S201). T202 bears the Phosphothreonine mark. A Phosphoserine modification is found at S226. Residues R229–Q251 form a disordered region. An SHP-box motif is present at residues N241–L248.

The protein belongs to the derlin family. As to quaternary structure, homotetramer. The four subunits of the tetramer are arranged in a twofold symmetry. Forms homo- and heterooligomers with DERL2 and DERL3; binding to DERL3 is poorer than that between DERL2 and DERL3. Interacts (via SHP-box motif) with VCP. Interacts with AMFR, SELENOS, SEL1L, SELENOK and SYVN1, as well as with SEL1L-SYVN1 and VCP-SELENOS protein complexes; this interaction is weaker than that observed between DERL2 and these complexes. Interacts with NGLY1 and YOD1. Does not bind to EDEM1. Interacts with DNAJB9. Interacts with RNF103. Interacts with HM13. Interacts with XBP1 isoform 1 (via luminal/ectodomain domain); the interaction obviates the need for ectodomain shedding prior HM13/SPP-mediated XBP1 isoform 1 cleavage. Interacts with the signal recognition particle/SRP and the SRP receptor; in the process of endoplasmic reticulum stress-induced pre-emptive quality control. May interact with UBXN6. Interacts with ZFAND2B; probably through VCP. Interacts with CCDC47. Interacts with C18orf32. May interact with TRAM1. Forms a complex with SVIP and VCP/p97.

It localises to the endoplasmic reticulum membrane. Functional component of endoplasmic reticulum-associated degradation (ERAD) for misfolded lumenal proteins. Forms homotetramers which encircle a large channel traversing the endoplasmic reticulum (ER) membrane. This allows the retrotranslocation of misfolded proteins from the ER into the cytosol where they are ubiquitinated and degraded by the proteasome. The channel has a lateral gate within the membrane which provides direct access to membrane proteins with no need to reenter the ER lumen first. May mediate the interaction between VCP and the misfolded protein. Also involved in endoplasmic reticulum stress-induced pre-emptive quality control, a mechanism that selectively attenuates the translocation of newly synthesized proteins into the endoplasmic reticulum and reroutes them to the cytosol for proteasomal degradation. By controlling the steady-state expression of the IGF1R receptor, indirectly regulates the insulin-like growth factor receptor signaling pathway. This is Derlin-1 from Pongo abelii (Sumatran orangutan).